Consider the following 502-residue polypeptide: Protein Dok-7 (502 aa).

The 106-residue stretch at 4–109 (SVVVEGYARL…WDARLRYSLG (106 aa)) folds into the PH domain. The IRS-type PTB domain occupies 105-210 (RYSLGEVHRF…RGISPTRGPF (106 aa)). Disordered regions lie at residues 210–232 (FGLR…RLNH), 249–279 (STAS…SDCS), 291–358 (TSIQ…GSFS), and 418–482 (EVGG…GHPG). Low complexity-rich tracts occupy residues 264–279 (ISGS…SDCS) and 301–316 (AGAK…PLPS). The segment covering 336-346 (GRQSSSDSGIA) has biased composition (polar residues). Low complexity predominate over residues 347–358 (TGSHSSYSGSFS). Basic and acidic residues predominate over residues 459 to 473 (PNEHFRSPSESKKSS).

Its subcellular location is the cell membrane. It is found in the synapse. Its function is as follows. Probable muscle-intrinsic activator of MUSK that plays an essential role in neuromuscular synaptogenesis. Acts in aneural activation of MUSK and subsequent acetylcholine receptor (AchR) clustering in myotubes. The protein is Protein Dok-7 (dok7) of Takifugu rubripes (Japanese pufferfish).